Reading from the N-terminus, the 279-residue chain is 3-methyl-2-oxobutanoate hydroxymethyltransferase (279 aa).

Residues Asp43 and Asp82 each contribute to the Mg(2+) site. Residues 43–44 (DS), Asp82, and Lys112 contribute to the 3-methyl-2-oxobutanoate site. Mg(2+) is bound at residue Glu114. Glu181 acts as the Proton acceptor in catalysis.

It belongs to the PanB family. As to quaternary structure, homodecamer; pentamer of dimers. It depends on Mg(2+) as a cofactor.

It localises to the cytoplasm. The catalysed reaction is 3-methyl-2-oxobutanoate + (6R)-5,10-methylene-5,6,7,8-tetrahydrofolate + H2O = 2-dehydropantoate + (6S)-5,6,7,8-tetrahydrofolate. Its pathway is cofactor biosynthesis; (R)-pantothenate biosynthesis; (R)-pantoate from 3-methyl-2-oxobutanoate: step 1/2. Its function is as follows. Catalyzes the reversible reaction in which hydroxymethyl group from 5,10-methylenetetrahydrofolate is transferred onto alpha-ketoisovalerate to form ketopantoate. This Geobacillus thermodenitrificans (strain NG80-2) protein is 3-methyl-2-oxobutanoate hydroxymethyltransferase.